Consider the following 267-residue polypeptide: Putative carbamate hydrolase RutD (267 aa).

Positions 14–115 (PVMVMISGLG…SALVIINGWL (102 aa)) constitute an AB hydrolase-1 domain.

Belongs to the AB hydrolase superfamily. Hydrolase RutD family.

The catalysed reaction is carbamate + 2 H(+) = NH4(+) + CO2. Its function is as follows. Involved in pyrimidine catabolism. May facilitate the hydrolysis of carbamate, a reaction that can also occur spontaneously. The sequence is that of Putative carbamate hydrolase RutD from Cronobacter turicensis (strain DSM 18703 / CCUG 55852 / LMG 23827 / z3032).